The primary structure comprises 328 residues: Phenylalanine--tRNA ligase alpha subunit (328 aa).

Glu245 contributes to the Mg(2+) binding site.

Belongs to the class-II aminoacyl-tRNA synthetase family. Phe-tRNA synthetase alpha subunit type 1 subfamily. As to quaternary structure, tetramer of two alpha and two beta subunits. The cofactor is Mg(2+).

It localises to the cytoplasm. It catalyses the reaction tRNA(Phe) + L-phenylalanine + ATP = L-phenylalanyl-tRNA(Phe) + AMP + diphosphate + H(+). The sequence is that of Phenylalanine--tRNA ligase alpha subunit (pheS) from Helicobacter pylori (strain ATCC 700392 / 26695) (Campylobacter pylori).